A 488-amino-acid polypeptide reads, in one-letter code: IQ domain-containing protein IQM1 (488 aa).

A disordered region spans residues 20–46 (RTNSFKRDDTNRHQNSPKSTMERSLSF). Polar residues predominate over residues 32 to 46 (HQNSPKSTMERSLSF). In terms of domain architecture, IQ spans 106-135 (LDAAATTLQKVYKSYRTRRNLADCAVVVEE). 2 disordered regions span residues 377–403 (SFKS…EKEE) and 448–472 (SPRV…VRVS). Basic and acidic residues predominate over residues 388–403 (RKEVSEEVEIPSEKEE).

As to quaternary structure, interacts (via IQ domain) with CAM5. Highly expressed in leaf mesophyll cells. Expressed in roots, rosette and cauline leaves, stems, flowers and siliques.

Its subcellular location is the cytoplasm. The protein resides in the nucleus. In terms of biological role, involved in the modulation of stomatal movement. Promotes stomatal opening. May play a role in the regulation of chitin signaling. May be involved in biotic and abiotic stress responses. This chain is IQ domain-containing protein IQM1, found in Arabidopsis thaliana (Mouse-ear cress).